Here is an 855-residue protein sequence, read N- to C-terminus: Inactive rhomboid protein 1 (855 aa).

Residues 1–36 (MSEARRDSTSSLQRKKPPWLKLDIPSAVPPTAEEPS) form a disordered region. At 1–411 (MSEARRDSTS…HRPFFTYWLT (411 aa)) the chain is on the cytoplasmic side. 2 positions are modified to phosphoserine: Ser-76 and Ser-176. Thr-180 and Thr-183 each carry phosphothreonine. A Phosphoserine modification is found at Ser-390. The chain crosses the membrane as a helical span at residues 412 to 432 (FVHSLVTILAVCIYGIAPVGF). Residues 433 to 655 (SQHETVDSVL…NPEVPDQFYR (223 aa)) lie on the Lumenal side of the membrane. N-linked (GlcNAc...) asparagine glycosylation is present at Asn-583. A helical membrane pass occupies residues 656–676 (LWLSLFLHAGILHCLVSICFQ). Topologically, residues 677–691 (MTVLRDLEKLAGWHR) are cytoplasmic. The helical transmembrane segment at 692–712 (IAIIYLLSGVTGNLASAIFLP) threads the bilayer. Residues 713–714 (YR) lie on the Lumenal side of the membrane. Residues 715-735 (AEVGPAGSQFGILACLFVELF) traverse the membrane as a helical segment. Residues 736 to 746 (QSWQILARPWR) lie on the Cytoplasmic side of the membrane. The chain crosses the membrane as a helical span at residues 747-767 (AFFKLLAVVLFLFTFGLLPWI). Residues 768–772 (DNFAH) are Lumenal-facing. The chain crosses the membrane as a helical span at residues 773-793 (ISGFISGLFLSFAFLPYISFG). At 794-803 (KFDLYRKRCQ) the chain is on the cytoplasmic side. The chain crosses the membrane as a helical span at residues 804–824 (IIIFQVVFLGLLAGLVVLFYF). The Lumenal segment spans residues 825-855 (YPVRCEWCEFLTCIPFTDKFCEKYELDAQLH).

It belongs to the peptidase S54 family. Homodimer, or homooligomer. Interacts with TGFA and HBEGF. Interacts with EGF; may retain EGF in the endoplasmic reticulum and regulates its degradation through the endoplasmic reticulum-associated degradation (ERAD). Interacts (via cytoplasmic N-terminus) with FRMD8/iTAP; this interaction leads to mutual protein stabilization. Interacts with ADAM17/TACE.

It localises to the endoplasmic reticulum membrane. The protein localises to the golgi apparatus membrane. Functionally, regulates ADAM17 protease, a sheddase of the epidermal growth factor (EGF) receptor ligands and TNF, thereby plays a role in sleep, cell survival, proliferation, migration and inflammation. Does not exhibit any protease activity on its own. This is Inactive rhomboid protein 1 (RHBDF1) from Papio anubis (Olive baboon).